We begin with the raw amino-acid sequence, 274 residues long: F-box protein SKIP5 (274 aa).

The 48-residue stretch at 32-79 (LTSLNNLDDGCLMHILSFLSPIPDRYNTALVCHRWRYLACHPRLWLRV) folds into the F-box domain.

Part of a SCF (SKP1-cullin-F-box) protein ligase complex. Interacts with SKP1A/ASK1.

Its pathway is protein modification; protein ubiquitination. The polypeptide is F-box protein SKIP5 (SKIP5) (Arabidopsis thaliana (Mouse-ear cress)).